The following is a 96-amino-acid chain: SPbeta prophage-derived uncharacterized protein YosV (96 aa).

The chain is SPbeta prophage-derived uncharacterized protein YosV (yosV) from Bacillus subtilis (strain 168).